The following is a 254-amino-acid chain: Alcohol dehydrogenase 2 (254 aa).

10–33 provides a ligand contact to NAD(+); it reads FVAGLGGIGLDTSREIVKSGPKNL. Ser138 serves as a coordination point for substrate. Catalysis depends on Tyr151, which acts as the Proton acceptor.

It belongs to the short-chain dehydrogenases/reductases (SDR) family. In terms of assembly, homodimer.

It carries out the reaction a primary alcohol + NAD(+) = an aldehyde + NADH + H(+). The enzyme catalyses a secondary alcohol + NAD(+) = a ketone + NADH + H(+). In Drosophila hydei (Fruit fly), this protein is Alcohol dehydrogenase 2 (Adh2).